The sequence spans 579 residues: Nif-specific regulatory protein (579 aa).

Positions Asp40–Leu187 constitute a GAF domain. The region spanning Ile226–Ala454 is the Sigma-54 factor interaction domain. Residues Gly254 to Glu261 and Ala317 to Glu326 contribute to the ATP site. The inter-domain linker stretch occupies residues Glu464–Ser536. Residues Cys468 and Cys473 each contribute to the a divalent metal cation site. A disordered region spans residues Arg502–Arg529. 7 tandem repeats follow at residues Ala505–Pro506, Pro507–Pro508, Glu509–Pro510, Ala511–Pro512, Ala513–Pro514, Glu515–Pro516, and Ala517–Pro518. Residues Ala505 to Pro518 are 7 X 2 AA tandem repeats of X-P. The span at Ala505–Ala520 shows a compositional bias: pro residues. The C-terminal DNA-binding domain stretch occupies residues Arg537–Ile579. Positions Gln551–Gln570 form a DNA-binding region, H-T-H motif.

Interacts with sigma-54.

Functionally, required for activation of most nif operons, which are directly involved in nitrogen fixation. This chain is Nif-specific regulatory protein (nifA1), found in Rhodobacter capsulatus (Rhodopseudomonas capsulata).